Reading from the N-terminus, the 248-residue chain is tRNA (guanine-N(1)-)-methyltransferase (248 aa).

Residues glycine 113 and 133-138 (VGDYVL) contribute to the S-adenosyl-L-methionine site.

Belongs to the RNA methyltransferase TrmD family. As to quaternary structure, homodimer.

The protein localises to the cytoplasm. It catalyses the reaction guanosine(37) in tRNA + S-adenosyl-L-methionine = N(1)-methylguanosine(37) in tRNA + S-adenosyl-L-homocysteine + H(+). In terms of biological role, specifically methylates guanosine-37 in various tRNAs. In Shewanella sp. (strain W3-18-1), this protein is tRNA (guanine-N(1)-)-methyltransferase.